The following is a 161-amino-acid chain: MKAVYPGSFDPITLGHVDIIKRALSIFDELVVLVTENPRKKCMFTLEERKKLIEEVLSDLDGVKVDVHHGLLVDYLKKHGIKVLVRGLRAVTDYEYELQMALANKKLYSDLETVFLIASEKFSFISSSLVKEVALYGGDVTEWVPPEVARALNEKLKEGKR.

Ser8 is a substrate binding site. ATP-binding positions include 8-9 and His16; that span reads SF. Residues 36–40, Leu72, and Arg86 contribute to the substrate site; that span reads ENPRK. ATP-binding positions include 87–89, Glu97, and 122–128; these read GLR and FSFISSS. Glu132 serves as a coordination point for substrate.

Belongs to the bacterial CoaD family. Homohexamer. Mg(2+) serves as cofactor.

It is found in the cytoplasm. The catalysed reaction is (R)-4'-phosphopantetheine + ATP + H(+) = 3'-dephospho-CoA + diphosphate. The protein operates within cofactor biosynthesis; coenzyme A biosynthesis; CoA from (R)-pantothenate: step 4/5. Functionally, reversibly transfers an adenylyl group from ATP to 4'-phosphopantetheine, yielding dephospho-CoA (dPCoA) and pyrophosphate. The sequence is that of Phosphopantetheine adenylyltransferase from Thermotoga maritima (strain ATCC 43589 / DSM 3109 / JCM 10099 / NBRC 100826 / MSB8).